A 222-amino-acid chain; its full sequence is Imidazoleglycerol-phosphate dehydratase (222 aa).

This sequence belongs to the imidazoleglycerol-phosphate dehydratase family.

The catalysed reaction is D-erythro-1-(imidazol-4-yl)glycerol 3-phosphate = 3-(imidazol-4-yl)-2-oxopropyl phosphate + H2O. The protein operates within amino-acid biosynthesis; L-histidine biosynthesis; L-histidine from 5-phospho-alpha-D-ribose 1-diphosphate: step 6/9. The polypeptide is Imidazoleglycerol-phosphate dehydratase (HIS3) (Scheffersomyces stipitis (strain ATCC 58785 / CBS 6054 / NBRC 10063 / NRRL Y-11545) (Yeast)).